A 218-amino-acid polypeptide reads, in one-letter code: Small ribosomal subunit protein uS3 (218 aa).

In terms of domain architecture, KH type-2 spans 38–106; it reads IRDYVAKRLS…RVHINIVEIK (69 aa).

It belongs to the universal ribosomal protein uS3 family. As to quaternary structure, part of the 30S ribosomal subunit. Forms a tight complex with proteins S10 and S14.

Functionally, binds the lower part of the 30S subunit head. Binds mRNA in the 70S ribosome, positioning it for translation. In Listeria monocytogenes serotype 4b (strain F2365), this protein is Small ribosomal subunit protein uS3.